Reading from the N-terminus, the 534-residue chain is Phosphoenolpyruvate carboxykinase (ATP) (534 aa).

Positions 58, 194, and 200 each coordinate substrate. Residues K200, H219, and 235–243 (GLSGTGKTT) contribute to the ATP site. Mn(2+)-binding residues include K200 and H219. D256 contacts Mn(2+). Residues E284, R322, and T449 each contribute to the ATP site. Residue R322 participates in substrate binding.

It belongs to the phosphoenolpyruvate carboxykinase (ATP) family. Mn(2+) serves as cofactor.

The protein localises to the cytoplasm. The catalysed reaction is oxaloacetate + ATP = phosphoenolpyruvate + ADP + CO2. It participates in carbohydrate biosynthesis; gluconeogenesis. Involved in the gluconeogenesis. Catalyzes the conversion of oxaloacetate (OAA) to phosphoenolpyruvate (PEP) through direct phosphoryl transfer between the nucleoside triphosphate and OAA. This Novosphingobium aromaticivorans (strain ATCC 700278 / DSM 12444 / CCUG 56034 / CIP 105152 / NBRC 16084 / F199) protein is Phosphoenolpyruvate carboxykinase (ATP).